We begin with the raw amino-acid sequence, 328 residues long: DNA-directed RNA polymerase subunit alpha (328 aa).

Residues 1 to 231 form an alpha N-terminal domain (alpha-NTD) region; it reads MIYQMQMPTK…DHITFFANFS (231 aa). An alpha C-terminal domain (alpha-CTD) region spans residues 247 to 328; that stretch reads DEFESMRKLL…MDITRYQLKG (82 aa).

It belongs to the RNA polymerase alpha chain family. Homodimer. The RNAP catalytic core consists of 2 alpha, 1 beta, 1 beta' and 1 omega subunit. When a sigma factor is associated with the core the holoenzyme is formed, which can initiate transcription.

The catalysed reaction is RNA(n) + a ribonucleoside 5'-triphosphate = RNA(n+1) + diphosphate. Its function is as follows. DNA-dependent RNA polymerase catalyzes the transcription of DNA into RNA using the four ribonucleoside triphosphates as substrates. The protein is DNA-directed RNA polymerase subunit alpha of Chlorobaculum tepidum (strain ATCC 49652 / DSM 12025 / NBRC 103806 / TLS) (Chlorobium tepidum).